We begin with the raw amino-acid sequence, 362 residues long: UDP-N-acetylglucosamine--N-acetylmuramyl-(pentapeptide) pyrophosphoryl-undecaprenol N-acetylglucosamine transferase (362 aa).

UDP-N-acetyl-alpha-D-glucosamine is bound by residues 15 to 17 (TGG), Asn127, Arg165, Ser191, Ile247, 266 to 271 (ALTVSE), and Gln292.

It belongs to the glycosyltransferase 28 family. MurG subfamily.

The protein resides in the cell inner membrane. The catalysed reaction is di-trans,octa-cis-undecaprenyl diphospho-N-acetyl-alpha-D-muramoyl-L-alanyl-D-glutamyl-meso-2,6-diaminopimeloyl-D-alanyl-D-alanine + UDP-N-acetyl-alpha-D-glucosamine = di-trans,octa-cis-undecaprenyl diphospho-[N-acetyl-alpha-D-glucosaminyl-(1-&gt;4)]-N-acetyl-alpha-D-muramoyl-L-alanyl-D-glutamyl-meso-2,6-diaminopimeloyl-D-alanyl-D-alanine + UDP + H(+). It participates in cell wall biogenesis; peptidoglycan biosynthesis. Cell wall formation. Catalyzes the transfer of a GlcNAc subunit on undecaprenyl-pyrophosphoryl-MurNAc-pentapeptide (lipid intermediate I) to form undecaprenyl-pyrophosphoryl-MurNAc-(pentapeptide)GlcNAc (lipid intermediate II). This is UDP-N-acetylglucosamine--N-acetylmuramyl-(pentapeptide) pyrophosphoryl-undecaprenol N-acetylglucosamine transferase from Shewanella baltica (strain OS185).